The chain runs to 90 residues: Probable Fe(2+)-trafficking protein (90 aa).

Belongs to the Fe(2+)-trafficking protein family.

Functionally, could be a mediator in iron transactions between iron acquisition and iron-requiring processes, such as synthesis and/or repair of Fe-S clusters in biosynthetic enzymes. This is Probable Fe(2+)-trafficking protein from Bordetella avium (strain 197N).